Reading from the N-terminus, the 154-residue chain is Endoribonuclease YbeY (154 aa).

Residues His-120, His-124, and His-130 each contribute to the Zn(2+) site.

It belongs to the endoribonuclease YbeY family. Requires Zn(2+) as cofactor.

It is found in the cytoplasm. Single strand-specific metallo-endoribonuclease involved in late-stage 70S ribosome quality control and in maturation of the 3' terminus of the 16S rRNA. In Oceanobacillus iheyensis (strain DSM 14371 / CIP 107618 / JCM 11309 / KCTC 3954 / HTE831), this protein is Endoribonuclease YbeY.